The primary structure comprises 584 residues: Vesicular glutamate transporter 2.1 (584 aa).

Over methionine 1–tyrosine 70 the chain is Cytoplasmic. A helical transmembrane segment spans residues isoleucine 71–glycine 91. Topologically, residues valine 92 to valine 124 are vesicular. N-linked (GlcNAc...) asparagine glycans are attached at residues asparagine 99 and asparagine 100. A helical membrane pass occupies residues glycine 125 to isoleucine 145. Residues serine 146 to arginine 148 lie on the Cytoplasmic side of the membrane. A helical transmembrane segment spans residues leucine 149–isoleucine 169. The Vesicular portion of the chain corresponds to proline 170 to tyrosine 177. A helical membrane pass occupies residues glycine 178 to cysteine 198. The Cytoplasmic portion of the chain corresponds to histidine 199 to threonine 216. The helical transmembrane segment at threonine 217–valine 237 threads the bilayer. The Vesicular portion of the chain corresponds to glutamine 238–serine 244. The chain crosses the membrane as a helical span at residues valine 245 to tyrosine 265. Residues glutamate 266–methionine 310 lie on the Cytoplasmic side of the membrane. A helical transmembrane segment spans residues proline 311–isoleucine 331. Over serine 332–glycine 349 the chain is Vesicular. A helical transmembrane segment spans residues methionine 350–alanine 370. Over aspartate 371 to lysine 386 the chain is Cytoplasmic. The chain crosses the membrane as a helical span at residues isoleucine 387–histidine 407. Residues serine 408–lysine 409 are Vesicular-facing. Residues glycine 410–phenylalanine 430 traverse the membrane as a helical segment. At asparagine 431–leucine 445 the chain is on the cytoplasmic side. The helical transmembrane segment at methionine 446–alanine 466 threads the bilayer. Residues methionine 467–glutamine 477 are Vesicular-facing. The helical transmembrane segment at tyrosine 478–alanine 498 threads the bilayer. Over serine 499–serine 584 the chain is Cytoplasmic.

It belongs to the major facilitator superfamily. Sodium/anion cotransporter family. VGLUT subfamily. As to expression, expressed in spinal cord and retinal ganglion cells.

Its subcellular location is the cytoplasmic vesicle. The protein localises to the secretory vesicle. It is found in the synaptic vesicle membrane. The protein resides in the membrane. It localises to the synapse. Its subcellular location is the synaptosome. The protein localises to the cell membrane. It carries out the reaction L-glutamate(out) = L-glutamate(in). The enzyme catalyses 3 Na(+)(out) + phosphate(out) = 3 Na(+)(in) + phosphate(in). It catalyses the reaction phosphate(in) = phosphate(out). The catalysed reaction is K(+)(in) + H(+)(out) = K(+)(out) + H(+)(in). It carries out the reaction chloride(in) = chloride(out). With respect to regulation, chloride channel activity is allosterically activated by lumenal H(+) and Cl(-) leading to synaptic vesicles acidification. The L-glutamate transport activity is allosterically activated by lumenal H(+) and Cl(-). The allosteric requirement for H(+) efficiently prevents non-vesicular efflux across the plasma membrane. The L-glutamate uniporter activity exhibits a biphasic dependence on chloride concentration. Its function is as follows. Multifunctional transporter that transports L-glutamate as well as multiple ions such as chloride, proton, potassium, sodium and phosphate. At the synaptic vesicle membrane, mainly functions as a uniporter which transports preferentially L-glutamate but also, phosphate from the cytoplasm into synaptic vesicles at presynaptic nerve terminals of excitatory neural cells. The L-glutamate or phosphate uniporter activity is electrogenic and is driven by the proton electrochemical gradient, mainly by the electrical gradient established by the vacuolar H(+)-ATPase across the synaptic vesicle membrane. In addition, functions as a chloride channel that allows a chloride permeation through the synaptic vesicle membrane therefore affects the proton electrochemical gradient and promotes synaptic vesicles acidification. Moreover, functions as a vesicular K(+)/H(+) antiport allowing to maintain the electrical gradient and to decrease chemical gradient and therefore sustain vesicular L-glutamate uptake. The vesicular H(+)/H(+) antiport activity is electroneutral. At the plasma membrane, following exocytosis, functions as a symporter of Na(+) and phosphate from the extracellular space to the cytoplasm allowing synaptic phosphate homeostasis regulation. The symporter activity is driven by an inside negative membrane potential and is electrogenic. Also involved in the regulation of retinal hyaloid vessel regression during postnatal development. May also play a role in the endocrine L-glutamatergic system of other tissues such as pineal gland and pancreas. Required for glutamate release by retinotectal synapses and visual acuity. The chain is Vesicular glutamate transporter 2.1 (slc17a6b) from Danio rerio (Zebrafish).